A 208-amino-acid polypeptide reads, in one-letter code: Large ribosomal subunit protein uL4 (208 aa).

The interval 58-77 is disordered; that stretch reads RGGGRKPWRQKGTGRARQGS. The span at 60-71 shows a compositional bias: basic residues; it reads GGRKPWRQKGTG.

This sequence belongs to the universal ribosomal protein uL4 family. Part of the 50S ribosomal subunit.

One of the primary rRNA binding proteins, this protein initially binds near the 5'-end of the 23S rRNA. It is important during the early stages of 50S assembly. It makes multiple contacts with different domains of the 23S rRNA in the assembled 50S subunit and ribosome. Functionally, forms part of the polypeptide exit tunnel. This chain is Large ribosomal subunit protein uL4, found in Caldicellulosiruptor bescii (strain ATCC BAA-1888 / DSM 6725 / KCTC 15123 / Z-1320) (Anaerocellum thermophilum).